Consider the following 311-residue polypeptide: Ribonuclease HIII (311 aa).

The RNase H type-2 domain maps to 95-311 (MSIVGSDEVG…NTEKAFRLLK (217 aa)). Positions 101, 102, and 206 each coordinate a divalent metal cation.

This sequence belongs to the RNase HII family. RnhC subfamily. Mn(2+) is required as a cofactor. The cofactor is Mg(2+).

The protein resides in the cytoplasm. The catalysed reaction is Endonucleolytic cleavage to 5'-phosphomonoester.. Endonuclease that specifically degrades the RNA of RNA-DNA hybrids. This is Ribonuclease HIII from Bacillus cereus (strain AH187).